Reading from the N-terminus, the 156-residue chain is Small ribosomal subunit protein uS7 (156 aa).

It belongs to the universal ribosomal protein uS7 family. In terms of assembly, part of the 30S ribosomal subunit. Contacts proteins S9 and S11.

Functionally, one of the primary rRNA binding proteins, it binds directly to 16S rRNA where it nucleates assembly of the head domain of the 30S subunit. Is located at the subunit interface close to the decoding center, probably blocks exit of the E-site tRNA. The protein is Small ribosomal subunit protein uS7 of Prochlorococcus marinus subsp. pastoris (strain CCMP1986 / NIES-2087 / MED4).